We begin with the raw amino-acid sequence, 38 residues long: Photosystem II reaction center protein L (38 aa).

A helical transmembrane segment spans residues 17 to 37 (SLYWGLLLIFVLAVLFSNYFF).

Belongs to the PsbL family. PSII is composed of 1 copy each of membrane proteins PsbA, PsbB, PsbC, PsbD, PsbE, PsbF, PsbH, PsbI, PsbJ, PsbK, PsbL, PsbM, PsbT, PsbX, PsbY, PsbZ, Psb30/Ycf12, at least 3 peripheral proteins of the oxygen-evolving complex and a large number of cofactors. It forms dimeric complexes.

The protein resides in the plastid. Its subcellular location is the chloroplast thylakoid membrane. In terms of biological role, one of the components of the core complex of photosystem II (PSII). PSII is a light-driven water:plastoquinone oxidoreductase that uses light energy to abstract electrons from H(2)O, generating O(2) and a proton gradient subsequently used for ATP formation. It consists of a core antenna complex that captures photons, and an electron transfer chain that converts photonic excitation into a charge separation. This subunit is found at the monomer-monomer interface and is required for correct PSII assembly and/or dimerization. The chain is Photosystem II reaction center protein L from Adiantum capillus-veneris (Maidenhair fern).